Reading from the N-terminus, the 183-residue chain is Photosystem I assembly protein Ycf4 (183 aa).

2 helical membrane passes run 21-43 (YIWGSLMCLGGLGFLTIGISSYL) and 63-85 (LVMCFYGVLGFLLGVYIWLLILW).

Belongs to the Ycf4 family.

It is found in the plastid. Its subcellular location is the chloroplast thylakoid membrane. Functionally, seems to be required for the assembly of the photosystem I complex. This is Photosystem I assembly protein Ycf4 from Chlorella vulgaris (Green alga).